Consider the following 380-residue polypeptide: Queuine tRNA-ribosyltransferase (380 aa).

The Proton acceptor role is filled by aspartate 89. Substrate is bound by residues 89-93 (DSGGF), aspartate 143, glutamine 187, and glycine 214. The interval 245–251 (GVGKPED) is RNA binding. Aspartate 264 acts as the Nucleophile in catalysis. The segment at 269 to 273 (TRNAR) is RNA binding; important for wobble base 34 recognition. Cysteine 302, cysteine 304, cysteine 307, and histidine 333 together coordinate Zn(2+).

The protein belongs to the queuine tRNA-ribosyltransferase family. As to quaternary structure, homodimer. Within each dimer, one monomer is responsible for RNA recognition and catalysis, while the other monomer binds to the replacement base PreQ1. It depends on Zn(2+) as a cofactor.

It carries out the reaction 7-aminomethyl-7-carbaguanine + guanosine(34) in tRNA = 7-aminomethyl-7-carbaguanosine(34) in tRNA + guanine. It participates in tRNA modification; tRNA-queuosine biosynthesis. Functionally, catalyzes the base-exchange of a guanine (G) residue with the queuine precursor 7-aminomethyl-7-deazaguanine (PreQ1) at position 34 (anticodon wobble position) in tRNAs with GU(N) anticodons (tRNA-Asp, -Asn, -His and -Tyr). Catalysis occurs through a double-displacement mechanism. The nucleophile active site attacks the C1' of nucleotide 34 to detach the guanine base from the RNA, forming a covalent enzyme-RNA intermediate. The proton acceptor active site deprotonates the incoming PreQ1, allowing a nucleophilic attack on the C1' of the ribose to form the product. After dissociation, two additional enzymatic reactions on the tRNA convert PreQ1 to queuine (Q), resulting in the hypermodified nucleoside queuosine (7-(((4,5-cis-dihydroxy-2-cyclopenten-1-yl)amino)methyl)-7-deazaguanosine). The protein is Queuine tRNA-ribosyltransferase of Proteus mirabilis (strain HI4320).